A 432-amino-acid polypeptide reads, in one-letter code: Trigger factor (432 aa).

The PPIase FKBP-type domain occupies 161-246 (EDRVTIDFTG…LKKVEERELP (86 aa)).

The protein belongs to the FKBP-type PPIase family. Tig subfamily.

The protein resides in the cytoplasm. It carries out the reaction [protein]-peptidylproline (omega=180) = [protein]-peptidylproline (omega=0). In terms of biological role, involved in protein export. Acts as a chaperone by maintaining the newly synthesized protein in an open conformation. Functions as a peptidyl-prolyl cis-trans isomerase. This chain is Trigger factor, found in Salmonella typhi.